Here is a 408-residue protein sequence, read N- to C-terminus: 4-O-methyl-glucuronoyl methylesterase 1 (408 aa).

A signal peptide spans 1 to 19 (MASSSRFAALLLLALPALA). Disulfide bonds link Cys-31-Cys-65, Cys-218-Cys-354, and Cys-250-Cys-326. The GXSYXG catalytic site motif motif lies at 217–222 (GCSRDG). Ser-219 (nucleophile) is an active-site residue. Residues Lys-223, Gln-265, and Glu-273 each coordinate substrate. Asn-287 carries N-linked (GlcNAc...) asparagine glycosylation. Trp-317 contributes to the substrate binding site. Asn-350 carries an N-linked (GlcNAc...) asparagine glycan. His-353 acts as the Proton donor/acceptor in catalysis. Asn-390, Asn-395, and Asn-401 each carry an N-linked (GlcNAc...) asparagine glycan.

The protein belongs to the carbohydrate esterase 15 (CE15) family.

Its subcellular location is the secreted. It catalyses the reaction a 4-O-methyl-alpha-D-glucuronosyl ester derivative + H2O = 4-O-methyl-alpha-D-glucuronate derivative + an alcohol + H(+). Glucuronoyl esterase which may play a significant role in biomass degradation, as it is considered to disconnect hemicellulose from lignin through the hydrolysis of the ester bond between 4-O-methyl-D-glucuronic acid residues of glucuronoxylans and aromatic alcohols of lignin. Can hydrolyze benzyl glucuronic acid (BnGlcA), allyl glucuronic acid (allylGlcA) and to a lower degree methyl glucuronic acid (MeGlcA) in vitro. The polypeptide is 4-O-methyl-glucuronoyl methylesterase 1 (Wolfiporia cocos (strain MD-104) (Brown rot fungus)).